A 154-amino-acid polypeptide reads, in one-letter code: Transcriptional repressor NrdR (154 aa).

The segment at 3-34 (CPFCRHPDSRVIDSRETDEGQAIRRRRSCPEC) is a zinc-finger region. In terms of domain architecture, ATP-cone spans 46–136 (LAVVKRSGVT…VYRSFSSADD (91 aa)).

It belongs to the NrdR family. The cofactor is Zn(2+).

In terms of biological role, negatively regulates transcription of bacterial ribonucleotide reductase nrd genes and operons by binding to NrdR-boxes. This chain is Transcriptional repressor NrdR, found in Mycobacterium bovis (strain ATCC BAA-935 / AF2122/97).